Reading from the N-terminus, the 425-residue chain is CinA-like protein (425 aa).

It belongs to the CinA family.

The sequence is that of CinA-like protein from Shewanella sp. (strain ANA-3).